We begin with the raw amino-acid sequence, 428 residues long: MSYLIKNGFILTSTGEKVQQDIRVEGEVIQAIGHLEREDGEEVIDAKGLFVSPGLIDLHVHLREPGGEKKETIETGSKAAARGGYTTIAAMPNTRPVPDTKEQMEWLMNRIEETSSVRVLPYASITTRQIGEEMTDFAALKEAGAFAFTDDGVGIQTAGMMYEAMKKAASLDQAIVAHCEDNSLIYGGCVHEGEFSKANGLNGIPSICESVHIARDVLLAEAANCHYHVCHISTKESVRVVRDAKKAGIRVTAEVSPHHLLLCDADIPGLDTNYKMNPPLRGKEDREALIEGLLDGTIDFIATDHAPHTEEEKNETMQRAPFGIVGLETAFPLLYTRFVKTGEWTLKELVDYMTIKPAEAFSLPYGKLEKGQIADITLIDLNKEMAIDKKSFLSKGQNTPFDKLTVSGWPVMTLASGKVVYEEGRLVK.

Zn(2+)-binding residues include His-59 and His-61. Substrate-binding positions include 61-63 (HLR) and Asn-93. Residues Asp-151, His-178, and His-231 each contribute to the Zn(2+) site. Asn-277 contributes to the substrate binding site. Asp-304 is a binding site for Zn(2+). The active site involves Asp-304. Substrate is bound by residues His-308 and 322–323 (FG).

It belongs to the metallo-dependent hydrolases superfamily. DHOase family. Class I DHOase subfamily. The cofactor is Zn(2+).

It catalyses the reaction (S)-dihydroorotate + H2O = N-carbamoyl-L-aspartate + H(+). Its pathway is pyrimidine metabolism; UMP biosynthesis via de novo pathway; (S)-dihydroorotate from bicarbonate: step 3/3. Functionally, catalyzes the reversible cyclization of carbamoyl aspartate to dihydroorotate. This chain is Dihydroorotase, found in Bacillus pumilus (strain SAFR-032).